The sequence spans 256 residues: Acetyl-coenzyme A carboxylase carboxyl transferase subunit alpha (256 aa).

The region spanning 1 to 236 (MTDVSRVLKE…KANLIEQITS (236 aa)) is the CoA carboxyltransferase C-terminal domain.

The protein belongs to the AccA family. In terms of assembly, acetyl-CoA carboxylase is a heterohexamer composed of biotin carboxyl carrier protein (AccB), biotin carboxylase (AccC) and two subunits each of ACCase subunit alpha (AccA) and ACCase subunit beta (AccD).

The protein resides in the cytoplasm. It carries out the reaction N(6)-carboxybiotinyl-L-lysyl-[protein] + acetyl-CoA = N(6)-biotinyl-L-lysyl-[protein] + malonyl-CoA. Its pathway is lipid metabolism; malonyl-CoA biosynthesis; malonyl-CoA from acetyl-CoA: step 1/1. In terms of biological role, component of the acetyl coenzyme A carboxylase (ACC) complex. First, biotin carboxylase catalyzes the carboxylation of biotin on its carrier protein (BCCP) and then the CO(2) group is transferred by the carboxyltransferase to acetyl-CoA to form malonyl-CoA. The protein is Acetyl-coenzyme A carboxylase carboxyl transferase subunit alpha of Streptococcus pyogenes serotype M2 (strain MGAS10270).